The chain runs to 405 residues: S-adenosylmethionine sensor upstream of mTORC1 (405 aa).

The disordered stretch occupies residues 1 to 34; it reads MEPGAGGRNTARAQRAGSPNTPPPREQERKLEQE. Basic and acidic residues predominate over residues 25-34; it reads REQERKLEQE. Residues arginine 95, glycine 172, aspartate 190, aspartate 202, phenylalanine 203, and serine 244 each coordinate S-adenosyl-L-methionine.

Belongs to the BMT2/SAMTOR family. Interacts with the DEPDC5 subunit of the GATOR1 complex; interaction is disrupted when SAMTOR binds S-adenosyl-L-methionine. Interacts with the KICSTOR complex; interaction is disrupted when SAMTOR binds S-adenosyl-L-methionine.

S-adenosyl-L-methionine-binding protein that acts as an inhibitor of mTORC1 signaling via interaction with the GATOR1 and KICSTOR complexes. Acts as a sensor of S-adenosyl-L-methionine to signal methionine sufficiency to mTORC1: in presence of methionine, binds S-adenosyl-L-methionine, leading to disrupt interaction with the GATOR1 and KICSTOR complexes and promote mTORC1 signaling. Upon methionine starvation, S-adenosyl-L-methionine levels are reduced, thereby promoting the association with GATOR1 and KICSTOR, leading to inhibit mTORC1 signaling. Probably also acts as a S-adenosyl-L-methionine-dependent methyltransferase (Potential). This chain is S-adenosylmethionine sensor upstream of mTORC1, found in Homo sapiens (Human).